We begin with the raw amino-acid sequence, 184 residues long: Elongation factor P (184 aa).

This sequence belongs to the elongation factor P family.

It localises to the cytoplasm. It participates in protein biosynthesis; polypeptide chain elongation. Its function is as follows. Involved in peptide bond synthesis. Stimulates efficient translation and peptide-bond synthesis on native or reconstituted 70S ribosomes in vitro. Probably functions indirectly by altering the affinity of the ribosome for aminoacyl-tRNA, thus increasing their reactivity as acceptors for peptidyl transferase. This Delftia acidovorans (strain DSM 14801 / SPH-1) protein is Elongation factor P.